We begin with the raw amino-acid sequence, 1022 residues long: D-2-hydroxyglutarate dehydrogenase (1022 aa).

Residues 53–286 (YQLLPDAVLF…SEARLDITPL (234 aa)) form the FAD-binding PCMH-type domain. (R)-2-hydroxyglutarate-binding residues include Arg-407 and His-505. Residues 667 to 700 (FSHEVKEAMSGCLACKACSTQCPIKIDVPAFRSR) form the 4Fe-4S ferredoxin-type domain. Residues Cys-678, Cys-681, Cys-684, and Cys-688 each contribute to the [4Fe-4S] cluster site.

In the N-terminal section; belongs to the FAD-binding oxidoreductase/transferase type 4 family. In terms of assembly, homotetramer. Requires [4Fe-4S] cluster as cofactor. The cofactor is FAD.

It catalyses the reaction (R)-2-hydroxyglutarate + A = 2-oxoglutarate + AH2. With respect to regulation, activity is completely inhibited by the addition of 0.5 mM Mn(2+), Ni(2+), or Co(2+) and partially inhibited by 0.5 mM Zn(2+). Functionally, catalyzes the oxidation of D-2-hydroxyglutarate (D-2-HGA) to 2-oxoglutarate. Appears to be the only D2HGDH in P.ananatis, providing the way to recycle D-2-HGA produced during L-serine synthesis by SerA, by converting it back to 2-oxoglutarate. Is involved in the utilization of D-2-HGA, that can support the growth of P.ananatis as a sole carbon source, although it barely serves as a good substrate. The physiological molecule that functions as the primary electron acceptor during D-2-HGA oxidation by YdiJ in P.ananatis is unknown. Shows strict substrate specificity towards D-2-HGA, since it has no detectable activity on L-2-hydroxyglutarate, L-malate, D-malate, L-lactate, D-lactate, L-tartrate, D-tartrate, L-glycerate, D-glycerate, glutarate, or pyruvate. The polypeptide is D-2-hydroxyglutarate dehydrogenase (Pantoea ananatis (strain AJ13355)).